The following is a 310-amino-acid chain: E3 ubiquitin-protein ligase AIP2 (310 aa).

The RING-type; atypical zinc finger occupies 230 to 271 (CCICKENLVIGDKMQELPCKHTFHPPCLKPWLDEHNSCPICR). Residues 276 to 306 (TDDQKYENWKEREKEAEEERKGAENAVRGGE) adopt a coiled-coil conformation. Positions 285–298 (KEREKEAEEERKGA) are enriched in basic and acidic residues. The segment at 285-310 (KEREKEAEEERKGAENAVRGGEYMYV) is disordered.

In terms of assembly, interacts with ABI3 (via C-terminus). Auto-ubiquitinated. Highly expressed in leaves and at lower levels in flowers and seeds.

It localises to the nucleus. It is found in the cytoplasm. The catalysed reaction is S-ubiquitinyl-[E2 ubiquitin-conjugating enzyme]-L-cysteine + [acceptor protein]-L-lysine = [E2 ubiquitin-conjugating enzyme]-L-cysteine + N(6)-ubiquitinyl-[acceptor protein]-L-lysine.. It functions in the pathway protein modification; protein ubiquitination. E3 ubiquitin-protein ligase that acts as a negative regulator of abscisic acid (ABA) signaling. Mediates ubiquitination and subsequent proteasomal degradation of the transcription factor ABI3. The protein is E3 ubiquitin-protein ligase AIP2 (AIP2) of Arabidopsis thaliana (Mouse-ear cress).